We begin with the raw amino-acid sequence, 142 residues long: Large ribosomal subunit protein uL13 (142 aa).

It belongs to the universal ribosomal protein uL13 family. Part of the 50S ribosomal subunit.

Its function is as follows. This protein is one of the early assembly proteins of the 50S ribosomal subunit, although it is not seen to bind rRNA by itself. It is important during the early stages of 50S assembly. The polypeptide is Large ribosomal subunit protein uL13 (Shigella dysenteriae serotype 1 (strain Sd197)).